The following is a 1222-amino-acid chain: Chitin synthase 4 (1222 aa).

Disordered stretches follow at residues 1 to 101 and 138 to 200; these read MSLP…ERNR and TERT…KRIE. Composition is skewed to polar residues over residues 11 to 24 and 42 to 77; these read QAYN…NSPS and NQAS…SPDG. The span at 182 to 196 shows a compositional bias: basic residues; the sequence is SGKIKRKSRRHSKPP. 2 helical membrane passes run 205-225 and 243-263; these read PPTF…GFIM and MGLI…TFGF. Residues N378, N418, and N440 are each glycosylated (N-linked (GlcNAc...) asparagine). Residues 513-533 traverse the membrane as a helical segment; sequence ALILSVVGVRFFLAIIFQWFI. Positions 576 to 630 are disordered; that stretch reads TVYGSSDRSSKRASFLPTTSRFSSVGGPDIRSQGGRRMPTTMASQSTSNQLLTPN. Over residues 616-630 the composition is skewed to polar residues; it reads TMASQSTSNQLLTPN. N-linked (GlcNAc...) asparagine glycans are attached at residues N637 and N1030. A run of 3 helical transmembrane segments spans residues 1055-1075, 1089-1109, and 1113-1133; these read FIIF…AFTF, IIPL…VIIT, and WSYI…NFVL. The tract at residues 1202-1222 is disordered; the sequence is GGQTWTSPPGHQYNEEYYSDA.

It belongs to the chitin synthase family. Class IV subfamily.

It is found in the cell membrane. It catalyses the reaction [(1-&gt;4)-N-acetyl-beta-D-glucosaminyl](n) + UDP-N-acetyl-alpha-D-glucosamine = [(1-&gt;4)-N-acetyl-beta-D-glucosaminyl](n+1) + UDP + H(+). Its function is as follows. Polymerizes chitin, a structural polymer of the cell wall and septum, by transferring the sugar moiety of UDP-GlcNAc to the non-reducing end of the growing chitin polymer. Shows additive effects in septum formation with CHS1, CHS2, CHS3A, CHS5, CHS6 and CHS7. Regulates conidiation. Involved in virulence and mediates mycotoxin deoxinivalenol (DON) biosynthesis via the regulation of the expression of TRI4, TRI5 and TRI6. The chain is Chitin synthase 4 from Gibberella zeae (strain ATCC MYA-4620 / CBS 123657 / FGSC 9075 / NRRL 31084 / PH-1) (Wheat head blight fungus).